The sequence spans 201 residues: MSAKLETLSQNLQEHFGDKLKSLKLALGEITIEVAAADYFCVMTALRDEAAFGFEEMIDLCGVDYSTYGDGTWQGARFAVVVHLLSVANNWRLRVRVFAEDEGFPSVASITTVWASANWFEREAFDLYGIAFVGHDDLRRILTDYGFIGHPFRKDFPISGHVEMRYDPDQARVIYQPVTIEPRENTPRIVREDTFGDTAHG.

Belongs to the complex I 30 kDa subunit family. NDH-1 is composed of 14 different subunits. Subunits NuoB, C, D, E, F, and G constitute the peripheral sector of the complex.

It localises to the cell inner membrane. The enzyme catalyses a quinone + NADH + 5 H(+)(in) = a quinol + NAD(+) + 4 H(+)(out). In terms of biological role, NDH-1 shuttles electrons from NADH, via FMN and iron-sulfur (Fe-S) centers, to quinones in the respiratory chain. The immediate electron acceptor for the enzyme in this species is believed to be ubiquinone. Couples the redox reaction to proton translocation (for every two electrons transferred, four hydrogen ions are translocated across the cytoplasmic membrane), and thus conserves the redox energy in a proton gradient. This Dechloromonas aromatica (strain RCB) protein is NADH-quinone oxidoreductase subunit C.